We begin with the raw amino-acid sequence, 525 residues long: Cytochrome P450 4V2 (525 aa).

Residues 14–34 (LLWGAASAVSLAGATILISIF) traverse the membrane as a helical segment. Residues Glu329 and Cys467 each coordinate heme.

It belongs to the cytochrome P450 family. Requires heme as cofactor.

The protein localises to the endoplasmic reticulum membrane. The enzyme catalyses dodecanoate + reduced [NADPH--hemoprotein reductase] + O2 = 12-hydroxydodecanoate + oxidized [NADPH--hemoprotein reductase] + H2O + H(+). It catalyses the reaction tetradecanoate + reduced [NADPH--hemoprotein reductase] + O2 = 14-hydroxytetradecanoate + oxidized [NADPH--hemoprotein reductase] + H2O + H(+). It carries out the reaction hexadecanoate + reduced [NADPH--hemoprotein reductase] + O2 = 16-hydroxyhexadecanoate + oxidized [NADPH--hemoprotein reductase] + H2O + H(+). The catalysed reaction is (5Z,8Z,11Z,14Z,17Z)-eicosapentaenoate + reduced [NADPH--hemoprotein reductase] + O2 = 20-hydroxy-(5Z,8Z,11Z,14Z,17Z)-eicosapentaenoate + oxidized [NADPH--hemoprotein reductase] + H2O + H(+). The enzyme catalyses (4Z,7Z,10Z,13Z,16Z,19Z)-docosahexaenoate + reduced [NADPH--hemoprotein reductase] + O2 = 22-hydroxy-(4Z,7Z,10Z,13Z,16Z,19Z)-docosahexaenoate + oxidized [NADPH--hemoprotein reductase] + H2O + H(+). Its pathway is lipid metabolism; fatty acid metabolism. Inhibited by N-hydroxy-N'-(4-n-butyl-2-methylphenyl formamidine)(HET0016) with an IC(50) of 38 nM. A cytochrome P450 monooxygenase involved in fatty acid metabolism in the eye. Catalyzes the omega-hydroxylation of polyunsaturated fatty acids (PUFAs) docosahexaenoate (DHA) and its precursor eicosapentaenoate (EPA), and may contribute to the homeostasis of these retinal PUFAs. Omega hydroxylates saturated fatty acids such as laurate, myristate and palmitate, the catalytic efficiency decreasing in the following order: myristate &gt; laurate &gt; palmitate (C14&gt;C12&gt;C16). Mechanistically, uses molecular oxygen inserting one oxygen atom into a substrate, and reducing the second into a water molecule, with two electrons provided by NADPH via cytochrome P450 reductase (CPR; NADPH-ferrihemoprotein reductase). The sequence is that of Cytochrome P450 4V2 (Cyp4v2) from Mus musculus (Mouse).